We begin with the raw amino-acid sequence, 401 residues long: Probable peptidoglycan glycosyltransferase FtsW (401 aa).

Residues 1 to 26 (MAEVLRWLRLDLGQSGGLAWERLDWR) are Cytoplasmic-facing. A helical transmembrane segment spans residues 27–47 (LALTVLALAGLGLVMVGSASV). At 48 to 65 (SIAEGATGDPLHYLYRQA) the chain is on the periplasmic side. The chain crosses the membrane as a helical span at residues 66 to 86 (VFLAVALMAAVACLHLSLDQF). Over 87 to 88 (YR) the chain is Cytoplasmic. Residues 89–109 (GGPVLLVLGFFLLLVVLIPGV) traverse the membrane as a helical segment. Topologically, residues 110–118 (GREVNGATR) are periplasmic. The chain crosses the membrane as a helical span at residues 119–139 (WIPLGLINLQVAEVARVCFII). Over 140–154 (YLAGYCVRRHAELPN) the chain is Cytoplasmic. A helical membrane pass occupies residues 155 to 175 (TSSAFAVPLAVFSLAAVLLLA). The Periplasmic segment spans residues 176–180 (QPDFG). Residues 181–201 (TALVLMATALGLLFLAGASLW) traverse the membrane as a helical segment. Arginine 202 is a topological domain (cytoplasmic). A helical transmembrane segment spans residues 203–223 (IGVLGLLLAGAAWLLIVGSPY). Topologically, residues 224-278 (RWQRLTTFTDPWADPFNAGFQLTQSLIAIGRGEWFGVGLGASVQKLFYLPEAHTD) are periplasmic. Residues 279-299 (FLFAVLAEELGLLGVVVVVAL) traverse the membrane as a helical segment. Residues 300-322 (FTYLAWRGMQIGLASLRADRPFG) are Cytoplasmic-facing. A helical membrane pass occupies residues 323–343 (AYLAWGLTISIGLQAFINMAV). Topologically, residues 344–354 (TMGLLPTKGLT) are periplasmic. The chain crosses the membrane as a helical span at residues 355–375 (LPLMSYGGSSLIMTGIALALL). The Cytoplasmic portion of the chain corresponds to 376-401 (LRVDYEARLAAQQPRPRKRPSGRVRP).

It belongs to the SEDS family. FtsW subfamily.

It localises to the cell inner membrane. It catalyses the reaction [GlcNAc-(1-&gt;4)-Mur2Ac(oyl-L-Ala-gamma-D-Glu-L-Lys-D-Ala-D-Ala)](n)-di-trans,octa-cis-undecaprenyl diphosphate + beta-D-GlcNAc-(1-&gt;4)-Mur2Ac(oyl-L-Ala-gamma-D-Glu-L-Lys-D-Ala-D-Ala)-di-trans,octa-cis-undecaprenyl diphosphate = [GlcNAc-(1-&gt;4)-Mur2Ac(oyl-L-Ala-gamma-D-Glu-L-Lys-D-Ala-D-Ala)](n+1)-di-trans,octa-cis-undecaprenyl diphosphate + di-trans,octa-cis-undecaprenyl diphosphate + H(+). It functions in the pathway cell wall biogenesis; peptidoglycan biosynthesis. Its function is as follows. Peptidoglycan polymerase that is essential for cell division. In Alkalilimnicola ehrlichii (strain ATCC BAA-1101 / DSM 17681 / MLHE-1), this protein is Probable peptidoglycan glycosyltransferase FtsW.